Reading from the N-terminus, the 219-residue chain is Ribose-5-phosphate isomerase A (219 aa).

Residues 28 to 31 (TGST), 81 to 84 (DSAD), and 94 to 97 (KGGG) each bind substrate. Glutamate 103 acts as the Proton acceptor in catalysis. Residue lysine 121 coordinates substrate.

The protein belongs to the ribose 5-phosphate isomerase family. In terms of assembly, homodimer.

It carries out the reaction aldehydo-D-ribose 5-phosphate = D-ribulose 5-phosphate. The protein operates within carbohydrate degradation; pentose phosphate pathway; D-ribose 5-phosphate from D-ribulose 5-phosphate (non-oxidative stage): step 1/1. Catalyzes the reversible conversion of ribose-5-phosphate to ribulose 5-phosphate. This is Ribose-5-phosphate isomerase A from Buchnera aphidicola subsp. Schizaphis graminum (strain Sg).